The following is a 407-amino-acid chain: Argininosuccinate synthase (407 aa).

ATP contacts are provided by residues 10–18 and Ala-37; that span reads AYSGGLDTS. Positions 88 and 93 each coordinate L-citrulline. Gly-118 contributes to the ATP binding site. L-aspartate is bound by residues Thr-120, Asn-124, and Asp-125. L-citrulline is bound at residue Asn-124. The L-citrulline site is built by Arg-128, Ser-179, Ser-188, Glu-264, and Tyr-276.

The protein belongs to the argininosuccinate synthase family. Type 1 subfamily. Homotetramer.

Its subcellular location is the cytoplasm. The enzyme catalyses L-citrulline + L-aspartate + ATP = 2-(N(omega)-L-arginino)succinate + AMP + diphosphate + H(+). Its pathway is amino-acid biosynthesis; L-arginine biosynthesis; L-arginine from L-ornithine and carbamoyl phosphate: step 2/3. This Jannaschia sp. (strain CCS1) protein is Argininosuccinate synthase.